Consider the following 363-residue polypeptide: Aminomethyltransferase (363 aa).

Belongs to the GcvT family. As to quaternary structure, the glycine cleavage system is composed of four proteins: P, T, L and H.

It catalyses the reaction N(6)-[(R)-S(8)-aminomethyldihydrolipoyl]-L-lysyl-[protein] + (6S)-5,6,7,8-tetrahydrofolate = N(6)-[(R)-dihydrolipoyl]-L-lysyl-[protein] + (6R)-5,10-methylene-5,6,7,8-tetrahydrofolate + NH4(+). Functionally, the glycine cleavage system catalyzes the degradation of glycine. The polypeptide is Aminomethyltransferase (Staphylococcus epidermidis (strain ATCC 35984 / DSM 28319 / BCRC 17069 / CCUG 31568 / BM 3577 / RP62A)).